A 230-amino-acid polypeptide reads, in one-letter code: Ribosomal RNA small subunit methyltransferase Nep1 (230 aa).

Residues glycine 184, glycine 189, and 205 to 210 contribute to the S-adenosyl-L-methionine site; that span reads IYNKPL.

Belongs to the class IV-like SAM-binding methyltransferase superfamily. RNA methyltransferase NEP1 family. In terms of assembly, homodimer.

The catalysed reaction is a pseudouridine in rRNA + S-adenosyl-L-methionine = an N(1)-methylpseudouridine in rRNA + S-adenosyl-L-homocysteine + H(+). Methyltransferase involved in ribosomal biogenesis. Specifically catalyzes the N1-methylation of the pseudouridine corresponding to position 914 in M.jannaschii 16S rRNA. This Staphylothermus marinus (strain ATCC 43588 / DSM 3639 / JCM 9404 / F1) protein is Ribosomal RNA small subunit methyltransferase Nep1.